The primary structure comprises 252 residues: MKNEIAAVVFFFTRLVRKHDKLKKEAVERFAEKLTLILQEKYKNHWYPEKPSKGQAYRCIRVNKFQRVDPDVLKACENSCILYSDLGLPKELTLWVDPCEVCCRYGEKNNAFIVASFENKDENKDEISRKVTRALDKVTSDYHSGSSSSDEETSKEMEVKPSSVTAAASPVYQISELIFPPLPMWHPLPRKKPGMYRGNGHQNHYPPPVPFGYPNQGRKNKPYRPIPVTWVPPPGMHCDRNHWINPHMLAPH.

The segment at 138–162 (VTSDYHSGSSSSDEETSKEMEVKPS) is disordered.

This sequence belongs to the BTG family. Ubiquitous. High expression in the ventricular zone of the developing central nervous system. High in ovary, testis, prostate, thymus and lung.

Its function is as follows. Overexpression impairs serum-induced cell cycle progression from the G0/G1 to S phase. The sequence is that of Protein BTG3 (BTG3) from Homo sapiens (Human).